Here is a 1026-residue protein sequence, read N- to C-terminus: Multidrug resistance protein MdtC (1026 aa).

Helical transmembrane passes span 16–36, 333–353, 360–380, 387–407, 435–455, 459–479, 528–548, 853–873, 897–917, 953–973, and 984–1004; these read LLALAITLVGLLGLRLLPVAP, EVEQSLAIAIALVILVVFLFL, LIPAVTVPVSLIGTCAAIYLC, LSLMALTIASGFVVDDAIVVL, VFSISLSLAAVFIPLLFMGGI, LFHEFAITLSASIAISLLIAL, WVLLTLLAVIGLNIWLYISIP, LLLILAAIATVYIVLGILYES, LFNAPFSLIALIGIMLLIGLV, PILMTTLAALFGALPLAFSYG, and ITIVGGLLVSQILTLYTTPVV.

This sequence belongs to the resistance-nodulation-cell division (RND) (TC 2.A.6) family. MdtC subfamily. Part of a tripartite efflux system composed of MdtA, MdtB and MdtC. MdtC forms a heteromultimer with MdtB.

The protein localises to the cell inner membrane. The sequence is that of Multidrug resistance protein MdtC from Edwardsiella ictaluri (strain 93-146).